The primary structure comprises 366 residues: Peptide chain release factor 2 (366 aa).

An N5-methylglutamine modification is found at Gln-253.

This sequence belongs to the prokaryotic/mitochondrial release factor family. In terms of processing, methylated by PrmC. Methylation increases the termination efficiency of RF2.

It is found in the cytoplasm. Peptide chain release factor 2 directs the termination of translation in response to the peptide chain termination codons UGA and UAA. The protein is Peptide chain release factor 2 of Yersinia pseudotuberculosis serotype I (strain IP32953).